Consider the following 288-residue polypeptide: Pyridoxal kinase PdxY (288 aa).

Substrate is bound by residues Ser12 and 47–48 (TQ). Residues Asp114, Glu151, Lys184, and 211–214 (RPLL) each bind ATP. Asp225 is a substrate binding site.

This sequence belongs to the pyridoxine kinase family. PdxY subfamily. In terms of assembly, homodimer. Requires Mg(2+) as cofactor.

It carries out the reaction pyridoxal + ATP = pyridoxal 5'-phosphate + ADP + H(+). The protein operates within cofactor metabolism; pyridoxal 5'-phosphate salvage; pyridoxal 5'-phosphate from pyridoxal: step 1/1. Its function is as follows. Pyridoxal kinase involved in the salvage pathway of pyridoxal 5'-phosphate (PLP). Catalyzes the phosphorylation of pyridoxal to PLP. The chain is Pyridoxal kinase PdxY from Pseudomonas savastanoi pv. phaseolicola (strain 1448A / Race 6) (Pseudomonas syringae pv. phaseolicola (strain 1448A / Race 6)).